The chain runs to 135 residues: Glutaredoxin-C3 (135 aa).

A Glutaredoxin domain is found at 26 to 134 (VARVERLASE…PLLKEAGALW (109 aa)). A disulfide bridge connects residues Cys-46 and Cys-49. The Responsive for interaction with TGA factors motif lies at 132–135 (ALWL).

This sequence belongs to the glutaredoxin family. CC-type subfamily.

Its subcellular location is the cytoplasm. The protein localises to the nucleus. Its function is as follows. Has a glutathione-disulfide oxidoreductase activity in the presence of NADPH and glutathione reductase. Reduces low molecular weight disulfides and proteins. The polypeptide is Glutaredoxin-C3 (GRXC3) (Oryza sativa subsp. japonica (Rice)).